A 248-amino-acid chain; its full sequence is Prepilin leader peptidase/N-methyltransferase (248 aa).

Residues 1-21 (MLSILFIFGLILGSFYYTAGC) traverse the membrane as a helical segment. The Zn(2+) site is built by Cys36, Cys39, Cys61, and Cys64. Helical transmembrane passes span 68 to 88 (ISFMYPAAELVTACLFAAAGI), 90 to 110 (FGISLELFPAVVFISLLIIVA), 114 to 134 (IHFMLIPNRILIFFLPFLAAA), 143 to 163 (WYAGLLGAAAGFLFLAVIAAI), 178 to 198 (VIGFVLGVKMLAAAFFFSVLI), and 223 to 243 (AIAAGSILAYLYGDSIISFYI).

The protein belongs to the peptidase A24 family. Requires Zn(2+) as cofactor.

The protein resides in the cell membrane. The enzyme catalyses Typically cleaves a -Gly-|-Phe- bond to release an N-terminal, basic peptide of 5-8 residues from type IV prepilin, and then N-methylates the new N-terminal amino group, the methyl donor being S-adenosyl-L-methionine.. Plays a role in type II pseudopili formation by proteolytically removing the leader sequence from substrate proteins and subsequently monomethylating the alpha-amino group of the newly exposed N-terminal phenylalanine. Substrates include proteins required for biogenesis of the type II general secretory apparatus. This is Prepilin leader peptidase/N-methyltransferase (comC) from Bacillus subtilis (strain 168).